A 562-amino-acid polypeptide reads, in one-letter code: F-box and WD repeat domain-containing 11-A (562 aa).

Residues 87-136 are homodimerization domain D; the sequence is GSFDKEKDLCIQLFDQWSESDQVEFVEHLIARMCHYQHGHINSYLKPMLQ. In terms of domain architecture, F-box spans 149 to 187; that stretch reads DHIAENILSFLDARSLCSAELVCREWQRVISDGMLWKKL. WD repeat units follow at residues 256–295, 296–335, 336–375, 379–418, 419–458, 459–491, and 508–538; these read RSEN…CLKV, LTGH…VLNT, LIHH…DISL, LVGH…FVRT, LNGH…CLRV, LEGH…WDLQ, and LVEH…LIWD.

In terms of assembly, self-associates. Component of the SCF(FBXW11) complex.

The protein localises to the cytoplasm. It is found in the nucleus. The protein operates within protein modification; protein ubiquitination. Substrate recognition component of a SCF (SKP1-CUL1-F-box protein) E3 ubiquitin-protein ligase complex which mediates the ubiquitination and subsequent proteasomal degradation of target proteins. Probably recognizes and binds to phosphorylated target proteins: the interaction with substrates requires the phosphorylation of the two serine residues in the substrates' destruction motif D-S-G-X(2,3,4)-S. SCF(FBXW11) mediates the ubiquitination of phosphorylated CTNNB1 and participates in Wnt signaling regulation. Participates in Wnt signaling regulation, and plays a role in eye and jaw development. SCF(FBXW11) plays a key role in NF-kappa-B activation by mediating ubiquitination of phosphorylated NFKBIA, leading to its degradation by the proteasome, thereby allowing the associated NF-kappa-B complex to translocate into the nucleus and to activate transcription. The chain is F-box and WD repeat domain-containing 11-A from Danio rerio (Zebrafish).